Reading from the N-terminus, the 96-residue chain is Protein Vpr (96 aa).

The interval 1 to 42 is homooligomerization; it reads MEQAPEDQGPQREPYNEWTIEILEELKREAVRHFPRPWLHDL. Phosphoserine; by host occurs at positions 79, 94, and 96.

Belongs to the HIV-1 VPR protein family. In terms of assembly, homooligomer, may form homodimer. Interacts with p6-gag region of the Pr55 Gag precursor protein through a (Leu-X-X)4 motif near the C-terminus of the P6gag protein. Interacts with host UNG. May interact with host RAD23A/HHR23A. Interacts with host VPRBP/DCAF1, leading to hijack the CUL4A-RBX1-DDB1-DCAF1/VPRBP complex, mediating ubiquitination of host proteins such as TERT and ZGPAT and arrest of the cell cycle in G2 phase. Phosphorylated on several residues by host. These phosphorylations regulate VPR activity for the nuclear import of the HIV-1 pre-integration complex.

It localises to the virion. The protein resides in the host nucleus. Its subcellular location is the host extracellular space. In terms of biological role, during virus replication, may deplete host UNG protein, and incude G2-M cell cycle arrest. Acts by targeting specific host proteins for degradation by the 26S proteasome, through association with the cellular CUL4A-DDB1 E3 ligase complex by direct interaction with host VPRPB/DCAF-1. Cell cycle arrest reportedly occurs within hours of infection and is not blocked by antiviral agents, suggesting that it is initiated by the VPR carried into the virion. Additionally, VPR induces apoptosis in a cell cycle dependent manner suggesting that these two effects are mechanistically linked. Detected in the serum and cerebrospinal fluid of AIDS patient, VPR may also induce cell death to bystander cells. Its function is as follows. During virus entry, plays a role in the transport of the viral pre-integration (PIC) complex to the host nucleus. This function is crucial for viral infection of non-dividing macrophages. May act directly at the nuclear pore complex, by binding nucleoporins phenylalanine-glycine (FG)-repeat regions. The polypeptide is Protein Vpr (Human immunodeficiency virus type 1 group M subtype K (isolate 97ZR-EQTB11) (HIV-1)).